Here is a 247-residue protein sequence, read N- to C-terminus: Probable enoyl-CoA hydratase echA6 (247 aa).

It belongs to the enoyl-CoA hydratase/isomerase family.

It carries out the reaction a (3S)-3-hydroxyacyl-CoA = a (2E)-enoyl-CoA + H2O. The catalysed reaction is a 4-saturated-(3S)-3-hydroxyacyl-CoA = a (3E)-enoyl-CoA + H2O. Its function is as follows. Could possibly oxidize fatty acids using specific components. The sequence is that of Probable enoyl-CoA hydratase echA6 (echA6) from Mycobacterium leprae (strain TN).